A 166-amino-acid polypeptide reads, in one-letter code: Twist-related protein (166 aa).

Residues 1–18 (MMQEESSSPVSPVDSLSN) are compositionally biased toward low complexity. Residues 1 to 83 (MMQEESSSPV…RVMANVRERQ (83 aa)) form a disordered region. Residues 28-39 (SKRGCRKRRSAR) show a composition bias toward basic residues. Residues 57–75 (ASSTGSSPQSFEELQSQRV) show a composition bias toward polar residues. Residues 72–123 (SQRVMANVRERQRTQSLNEAFSSLRKIIPTLPSDKLSKIQTLKLASRYIDFL) form the bHLH domain.

As to quaternary structure, efficient DNA binding requires dimerization with another bHLH protein. Homodimer. As to expression, subset of mesodermal cells.

The protein localises to the nucleus. In terms of biological role, probable transcription factor, which may be involved, with other proteins, in establishing the pattern of cell type-specific gene expression in mesodermal cell subgroups. The polypeptide is Twist-related protein (twist1) (Xenopus laevis (African clawed frog)).